A 378-amino-acid polypeptide reads, in one-letter code: Glutamate 5-kinase (378 aa).

Residue K20 coordinates ATP. Substrate is bound by residues S60, D147, and N159. ATP-binding positions include 179 to 180 and 221 to 227; these read TD and TGGMLTK. A PUA domain is found at 286–364; it reads RGRVVLDAGA…SQIARILGSM (79 aa).

This sequence belongs to the glutamate 5-kinase family.

The protein localises to the cytoplasm. It carries out the reaction L-glutamate + ATP = L-glutamyl 5-phosphate + ADP. The protein operates within amino-acid biosynthesis; L-proline biosynthesis; L-glutamate 5-semialdehyde from L-glutamate: step 1/2. Functionally, catalyzes the transfer of a phosphate group to glutamate to form L-glutamate 5-phosphate. This chain is Glutamate 5-kinase, found in Bordetella petrii (strain ATCC BAA-461 / DSM 12804 / CCUG 43448).